The following is a 78-amino-acid chain: Exodeoxyribonuclease 7 small subunit (78 aa).

This sequence belongs to the XseB family. In terms of assembly, heterooligomer composed of large and small subunits.

It localises to the cytoplasm. The catalysed reaction is Exonucleolytic cleavage in either 5'- to 3'- or 3'- to 5'-direction to yield nucleoside 5'-phosphates.. Bidirectionally degrades single-stranded DNA into large acid-insoluble oligonucleotides, which are then degraded further into small acid-soluble oligonucleotides. The chain is Exodeoxyribonuclease 7 small subunit from Paracoccus zeaxanthinifaciens.